The chain runs to 542 residues: MGEEQSTVSGGGGPQESQTLASGTAGHPEPPRPQGDSARAPPLRAASAEPSGGGCGSDWGCADTSAPEPARSLGPPGWSKSRAPAQPAGLALTGPLNPQTLPLQLELEEEEEEAGDRKEGGDEQQEAPPGEELEPRTRVGAADGLVLDVLGQRRPSLAKRQVFCSVYCVESDLPEAPASEQLSPPASPPGAPPVLNPPSTRSSFPSPRLSLPTDSLSPDGGSIELEFYLAPEPFSMPSLLGAPPYSGLGGVGDPYVPLMVLMCRVCLEDKPIKPLPCCKKAVCEECLKVYLSAQVQLGQVEIKCPITECFEFLEETTVVYNLTHEDSIKYKYFLELGRIDSSTKPCPQCKHFTTFKKKGHIPTPSRSESKYKIQCPTCQFVWCFKCHSPWHEGVNCKEYKKGDKLLRHWASEIEHGQRNAQKCPKCKIHIQRTEGCDHMTCSQCNTNFCYRCGERYRQLRFFGDHTSNLSIFGCKYRYLPERPHLRRLVRGSVCAGKLFIAPLIMVLGLALGAIAVVIGLFVFPIYCLCKKQRKRSRTGMHW.

Disordered stretches follow at residues 1 to 140 (MGEE…TRVG) and 176 to 216 (APAS…TDSL). Over residues 37 to 50 (SARAPPLRAASAEP) the composition is skewed to low complexity. Over residues 122 to 132 (DEQQEAPPGEE) the composition is skewed to acidic residues. The segment covering 185-196 (PASPPGAPPVLN) has biased composition (pro residues). Residues 197-213 (PPSTRSSFPSPRLSLPT) show a composition bias toward low complexity. The interval 259 to 478 (MVLMCRVCLE…LSIFGCKYRY (220 aa)) is TRIAD supradomain. Cysteine 263, cysteine 266, cysteine 283, cysteine 286, cysteine 383, cysteine 386, histidine 391, cysteine 396, cysteine 423, and cysteine 426 together coordinate Zn(2+). The RING-type 1 zinc-finger motif lies at 263 to 309 (CRVCLEDKPIKPLPCCKKAVCEECLKVYLSAQVQLGQVEIKCPITEC). The IBR-type zinc-finger motif lies at 328-396 (IKYKYFLELG…HSPWHEGVNC (69 aa)). An RING-type 2; atypical zinc finger spans residues 423–452 (CPKCKIHIQRTEGCDHMTCSQCNTNFCYRC). The active site involves cysteine 436. Cysteine 441, cysteine 444, cysteine 449, cysteine 452, histidine 465, and cysteine 474 together coordinate Zn(2+). A helical transmembrane segment spans residues 503–523 (LIMVLGLALGAIAVVIGLFVF).

The protein belongs to the RBR family. RNF217 subfamily. In terms of assembly, interacts with HAX1. As to expression, mainly expressed in testis and skeletal muscle.

The protein localises to the membrane. It localises to the cytoplasm. It carries out the reaction [E2 ubiquitin-conjugating enzyme]-S-ubiquitinyl-L-cysteine + [acceptor protein]-L-lysine = [E2 ubiquitin-conjugating enzyme]-L-cysteine + [acceptor protein]-N(6)-ubiquitinyl-L-lysine.. It functions in the pathway protein modification; protein ubiquitination. E3 ubiquitin-protein ligase which accepts ubiquitin from E2 ubiquitin-conjugating enzymes in the form of a thioester and then directly transfers the ubiquitin to targeted substrates. Mediates the degradation of the iron exporter ferroportin/SLC40A1 and thus regulates iron homeostasis. The chain is E3 ubiquitin-protein ligase RNF217 (RNF217) from Homo sapiens (Human).